Here is a 130-residue protein sequence, read N- to C-terminus: Small ribosomal subunit protein uS11 (130 aa).

This sequence belongs to the universal ribosomal protein uS11 family. In terms of assembly, part of the 30S ribosomal subunit. Interacts with proteins S7 and S18. Binds to IF-3.

Its function is as follows. Located on the platform of the 30S subunit, it bridges several disparate RNA helices of the 16S rRNA. Forms part of the Shine-Dalgarno cleft in the 70S ribosome. This Buchnera aphidicola subsp. Schizaphis graminum (strain Sg) protein is Small ribosomal subunit protein uS11.